Here is an 80-residue protein sequence, read N- to C-terminus: GSQFGKGKGQLIGVGAGALLGAILGNQIGAGMDEQDRRLAELTSQRALETTPSGTSIEWRNPDNGNYGYVTPSKTYKNST.

Positions 47 to 58 (ALETTPSGTSIE) are enriched in polar residues. The interval 47-80 (ALETTPSGTSIEWRNPDNGNYGYVTPSKTYKNST) is disordered.

The protein belongs to the rickettsiale 17 kDa surface antigen family.

The protein localises to the cell outer membrane. This chain is 17 kDa surface antigen (omp), found in Rickettsia canadensis.